The sequence spans 471 residues: MKIKTRFAPSPTGYLHVGGARTALYSWLFARNHGGEFVLRIEDTDLERSTPEAIEAIMDGMNWLSLEWDEGPYFQTKRFDRYNAVIDEMLEAGTAYKCYCSKERLEALREEQMAKGEKPRYDGRCRHGHEHHSDDEPCVVRFANPQDGSVIFDDQIRGSIEFSNQELDDLIIRRTDGSPTYNFCVVVDDWDMEITHVIRGEDHINNTPRQINILKALNAPVPVYAHVSMINGDDGKKLSKRHGAVSVMQYRDDGYLPEALLNYLVRLGWSSGDQEIFTREEMIKLFSLNAVSKSASAFNTDKLLWLNHHYINSLAPEYVATHLQWHIEQENIDTRNGPQLAELVKLLGERCKTLKEMAQSCRYFYEDFAEFDADAAKKHLRPVARQPLEVVRDKLAAITEWSAENVHHAIQATADELEVGMGKVGMPLRVAVTGAGQSPALDVTVHAIGKSRSIERINKALAFIAERENQQ.

A 'HIGH' region motif is present at residues 9-19 (PSPTGYLHVGG). Cysteine 98, cysteine 100, cysteine 125, and histidine 127 together coordinate Zn(2+). The 'KMSKS' region signature appears at 237–241 (KLSKR). Lysine 240 contributes to the ATP binding site.

This sequence belongs to the class-I aminoacyl-tRNA synthetase family. Glutamate--tRNA ligase type 1 subfamily. In terms of assembly, monomer. The cofactor is Zn(2+).

It localises to the cytoplasm. It catalyses the reaction tRNA(Glu) + L-glutamate + ATP = L-glutamyl-tRNA(Glu) + AMP + diphosphate. Catalyzes the attachment of glutamate to tRNA(Glu) in a two-step reaction: glutamate is first activated by ATP to form Glu-AMP and then transferred to the acceptor end of tRNA(Glu). This Citrobacter koseri (strain ATCC BAA-895 / CDC 4225-83 / SGSC4696) protein is Glutamate--tRNA ligase.